The primary structure comprises 391 residues: Nicotinate phosphoribosyltransferase (391 aa).

Residue H216 is modified to Phosphohistidine; by autocatalysis.

Belongs to the NAPRTase family. In terms of processing, transiently phosphorylated on a His residue during the reaction cycle. Phosphorylation strongly increases the affinity for substrates and increases the rate of nicotinate D-ribonucleotide production. Dephosphorylation regenerates the low-affinity form of the enzyme, leading to product release.

It carries out the reaction nicotinate + 5-phospho-alpha-D-ribose 1-diphosphate + ATP + H2O = nicotinate beta-D-ribonucleotide + ADP + phosphate + diphosphate. The protein operates within cofactor biosynthesis; NAD(+) biosynthesis; nicotinate D-ribonucleotide from nicotinate: step 1/1. Functionally, catalyzes the synthesis of beta-nicotinate D-ribonucleotide from nicotinate and 5-phospho-D-ribose 1-phosphate at the expense of ATP. The polypeptide is Nicotinate phosphoribosyltransferase (Bordetella petrii (strain ATCC BAA-461 / DSM 12804 / CCUG 43448)).